Consider the following 256-residue polypeptide: Protein FixA (256 aa).

It belongs to the ETF beta-subunit/FixA family. As to quaternary structure, heterodimer of FixA and FixB.

It participates in amine and polyamine metabolism; carnitine metabolism. Functionally, required for anaerobic carnitine reduction. May bring reductant to CaiA. This Salmonella dublin (strain CT_02021853) protein is Protein FixA.